The chain runs to 147 residues: 3-dehydroquinate dehydratase (147 aa).

The Proton acceptor role is filled by tyrosine 24. The substrate site is built by asparagine 75, histidine 81, and aspartate 88. The active-site Proton donor is histidine 101. Substrate-binding positions include 102–103 (IS) and arginine 112.

This sequence belongs to the type-II 3-dehydroquinase family. As to quaternary structure, homododecamer.

The enzyme catalyses 3-dehydroquinate = 3-dehydroshikimate + H2O. The protein operates within metabolic intermediate biosynthesis; chorismate biosynthesis; chorismate from D-erythrose 4-phosphate and phosphoenolpyruvate: step 3/7. In terms of biological role, catalyzes a trans-dehydration via an enolate intermediate. The sequence is that of 3-dehydroquinate dehydratase from Cereibacter sphaeroides (strain KD131 / KCTC 12085) (Rhodobacter sphaeroides).